The sequence spans 939 residues: UvrABC system protein A (939 aa).

32 to 39 (GLSGSGKS) lines the ATP pocket. Residues 252–279 (CADCGISIDELAPRMFSFNSPFGKCERC) form a C4-type zinc finger. ABC transporter domains lie at 309–588 (WGDS…ENSL) and 608–936 (GNGN…KYLK). Residue 640–647 (GVSGSGKS) participates in ATP binding. The segment at 739-765 (CEACSGDGIIKIEMQFLSDVYVPCEVC) adopts a C4-type zinc-finger fold.

This sequence belongs to the ABC transporter superfamily. UvrA family. Forms a heterotetramer with UvrB during the search for lesions.

Its subcellular location is the cytoplasm. Functionally, the UvrABC repair system catalyzes the recognition and processing of DNA lesions. UvrA is an ATPase and a DNA-binding protein. A damage recognition complex composed of 2 UvrA and 2 UvrB subunits scans DNA for abnormalities. When the presence of a lesion has been verified by UvrB, the UvrA molecules dissociate. This chain is UvrABC system protein A, found in Clostridium perfringens (strain 13 / Type A).